We begin with the raw amino-acid sequence, 125 residues long: MPTFNQLIRHGREEKRRTDRTRALDKCPQKTGVCLRVSTRTPKKPNSALRKIAKVRLSNRHDIFAYIPGEGHNLQEHSTVLIRGGRVKDLPGVKFHCIRGVKDLMGIPGRRRGRSKYGAEKPKSI.

Belongs to the universal ribosomal protein uS12 family. Component of the mitochondrial ribosome small subunit.

It is found in the mitochondrion. Its function is as follows. Protein S12 is involved in the translation initiation step. The protein is Small ribosomal subunit protein uS12m (RPS12) of Arabidopsis thaliana (Mouse-ear cress).